Reading from the N-terminus, the 82-residue chain is Sulfur carrier protein TusA (82 aa).

Cys-17 serves as the catalytic Cysteine persulfide intermediate.

It belongs to the sulfur carrier protein TusA family.

Its subcellular location is the cytoplasm. Sulfur carrier protein which probably makes part of a sulfur-relay system. The protein is Sulfur carrier protein TusA of Glaesserella parasuis serovar 5 (strain SH0165) (Haemophilus parasuis).